Here is a 607-residue protein sequence, read N- to C-terminus: Dolichyl-diphosphooligosaccharide--protein glycosyltransferase subunit 1 (607 aa).

An N-terminal signal peptide occupies residues 1 to 23; that stretch reads MEAPAARLFLLLLLGTWAPAPGS. The Lumenal portion of the chain corresponds to 24–434; sequence ASSEAPPLIN…VVHYTFNKVL (411 aa). N6-acetyllysine is present on Lys-187. An N-linked (GlcNAc...) asparagine glycan is attached at Asn-299. The chain crosses the membrane as a helical span at residues 435–455; that stretch reads MLQEPLLVVAAFYILFFTVII. Residues 456-607 are Cytoplasmic-facing; the sequence is YVRLDFSITK…TKIDHILDAL (152 aa). Lys-538 is modified (N6-acetyllysine; alternate). A Glycyl lysine isopeptide (Lys-Gly) (interchain with G-Cter in SUMO2); alternate cross-link involves residue Lys-538.

Belongs to the OST1 family. Component of the oligosaccharyltransferase (OST) complex. OST exists in two different complex forms which contain common core subunits RPN1, RPN2, OST48, OST4, DAD1 and TMEM258, either STT3A or STT3B as catalytic subunits, and form-specific accessory subunits. STT3A complex assembly occurs through the formation of 3 subcomplexes. Subcomplex 1 contains RPN1 and TMEM258, subcomplex 2 contains the STT3A-specific subunits STT3A, DC2/OSTC, and KCP2 as well as the core subunit OST4, and subcomplex 3 contains RPN2, DAD1, and OST48. The STT3A complex can form stable complexes with the Sec61 complex or with both the Sec61 and TRAP complexes. Interacts with TMEM35A/NACHO. In terms of processing, ubiquitinated by the ECS(ASB11) complex. Post-translationally, ufmylated by UFL1 in response to endoplasmic reticulum stress, promoting reticulophagy of endoplasmic reticulum sheets.

The protein resides in the endoplasmic reticulum membrane. It participates in protein modification; protein glycosylation. In terms of biological role, subunit of the oligosaccharyl transferase (OST) complex that catalyzes the initial transfer of a defined glycan (Glc(3)Man(9)GlcNAc(2) in eukaryotes) from the lipid carrier dolichol-pyrophosphate to an asparagine residue within an Asn-X-Ser/Thr consensus motif in nascent polypeptide chains, the first step in protein N-glycosylation. N-glycosylation occurs cotranslationally and the complex associates with the Sec61 complex at the channel-forming translocon complex that mediates protein translocation across the endoplasmic reticulum (ER). All subunits are required for a maximal enzyme activity. In Pongo abelii (Sumatran orangutan), this protein is Dolichyl-diphosphooligosaccharide--protein glycosyltransferase subunit 1.